A 277-amino-acid chain; its full sequence is 3-methyl-2-oxobutanoate hydroxymethyltransferase (277 aa).

Mg(2+) is bound by residues Asp43 and Asp82. Residues 43-44 (DS), Asp82, and Lys112 each bind 3-methyl-2-oxobutanoate. Glu114 is a Mg(2+) binding site. The active-site Proton acceptor is the Glu181.

The protein belongs to the PanB family. As to quaternary structure, homodecamer; pentamer of dimers. Mg(2+) is required as a cofactor.

It is found in the cytoplasm. It carries out the reaction 3-methyl-2-oxobutanoate + (6R)-5,10-methylene-5,6,7,8-tetrahydrofolate + H2O = 2-dehydropantoate + (6S)-5,6,7,8-tetrahydrofolate. Its pathway is cofactor biosynthesis; (R)-pantothenate biosynthesis; (R)-pantoate from 3-methyl-2-oxobutanoate: step 1/2. Functionally, catalyzes the reversible reaction in which hydroxymethyl group from 5,10-methylenetetrahydrofolate is transferred onto alpha-ketoisovalerate to form ketopantoate. The chain is 3-methyl-2-oxobutanoate hydroxymethyltransferase from Bacillus subtilis (strain 168).